The following is a 527-amino-acid chain: Catalase (527 aa).

Basic and acidic residues predominate over residues 1–22 (MSDSRDPASDQMKQWKEQRASQ). The disordered stretch occupies residues 1 to 34 (MSDSRDPASDQMKQWKEQRASQRPDVLTTGGGNP). Serine 2 carries the N-acetylserine modification. Serine 9 carries the post-translational modification Phosphoserine. An N6-succinyllysine modification is found at lysine 13. Serine 21 carries the post-translational modification Phosphoserine. Residues histidine 75 and asparagine 148 contribute to the active site. NADP(+)-binding residues include histidine 194, serine 201, arginine 203, and asparagine 213. N6-succinyllysine is present on lysine 221. Lysine 233 is modified (N6-acetyllysine). Residues lysine 237, tryptophan 303, histidine 305, and lysine 306 each contribute to the NADP(+) site. At lysine 306 the chain carries N6-acetyllysine; alternate. An N6-succinyllysine; alternate modification is found at lysine 306. Tyrosine 358 is a heme binding site. Phosphoserine is present on residues serine 417 and serine 422. Lysine 430 carries the N6-acetyllysine; alternate modification. Lysine 430 carries the N6-succinyllysine; alternate modification. Serine 434 carries the phosphoserine modification. 2 positions are modified to N6-acetyllysine; alternate: lysine 449 and lysine 480. Lysine 449 and lysine 480 each carry N6-succinyllysine; alternate. Residue lysine 499 is modified to N6-acetyllysine. Position 511 is a phosphothreonine (threonine 511). Residue serine 517 is modified to Phosphoserine. At lysine 522 the chain carries N6-succinyllysine. Residues 524–527 (KANL) carry the Microbody targeting signal; atypical motif.

Belongs to the catalase family. Homotetramer. Interacts (via microbody targeting signal) with PEX5, monomeric form interacts with PEX5, leading to its translocation into peroxisomes. Heme serves as cofactor. The cofactor is NADP(+).

It localises to the peroxisome matrix. It carries out the reaction 2 H2O2 = O2 + 2 H2O. In terms of biological role, catalyzes the degradation of hydrogen peroxide (H(2)O(2)) generated by peroxisomal oxidases to water and oxygen, thereby protecting cells from the toxic effects of hydrogen peroxide. Promotes growth of cells including T-cells, B-cells, myeloid leukemia cells, melanoma cells, mastocytoma cells and normal and transformed fibroblast cells. This Mus musculus (Mouse) protein is Catalase (Cat).